Here is a 134-residue protein sequence, read N- to C-terminus: NADH-quinone oxidoreductase subunit A (134 aa).

3 helical membrane passes run phenylalanine 12–leucine 32, phenylalanine 64–tryptophan 84, and tryptophan 93–leucine 113.

This sequence belongs to the complex I subunit 3 family. In terms of assembly, NDH-1 is composed of 14 different subunits. Subunits NuoA, H, J, K, L, M, N constitute the membrane sector of the complex.

The protein localises to the cell inner membrane. The catalysed reaction is a quinone + NADH + 5 H(+)(in) = a quinol + NAD(+) + 4 H(+)(out). In terms of biological role, NDH-1 shuttles electrons from NADH, via FMN and iron-sulfur (Fe-S) centers, to quinones in the respiratory chain. The immediate electron acceptor for the enzyme in this species is believed to be ubiquinone. Couples the redox reaction to proton translocation (for every two electrons transferred, four hydrogen ions are translocated across the cytoplasmic membrane), and thus conserves the redox energy in a proton gradient. This chain is NADH-quinone oxidoreductase subunit A, found in Aeromonas salmonicida (strain A449).